Here is a 221-residue protein sequence, read N- to C-terminus: Very-long-chain (3R)-3-hydroxyacyl-CoA dehydratase PASTICCINO 2B (221 aa).

The Cytoplasmic portion of the chain corresponds to 1-11 (MTGVGSAVRRL). A helical transmembrane segment spans residues 12–32 (YLSVYNWAVFFGWAQVLYYAV). At 33 to 51 (TTLLESGHEAVYAAVERPL) the chain is on the lumenal side. The chain crosses the membrane as a helical span at residues 52 to 70 (QFAQTAAFLEILHGLVGLV). The Cytoplasmic portion of the chain corresponds to 71 to 76 (RSPVSA). A helical transmembrane segment spans residues 77–95 (TLPQIGSRLFLTWGILWSF). Residues 96 to 100 (PETHS) are Lumenal-facing. The chain crosses the membrane as a helical span at residues 101 to 121 (HILVTSLVISWSITEIIRYSF). Over 122–141 (FGMKETFGFAPSWLLWLRYS) the chain is Cytoplasmic. Residues 142 to 165 (TFMVLYPTGISSEVGLIYIALPYM) traverse the membrane as a helical segment. Active-site residues include tyrosine 147 and glutamate 154. The Lumenal segment spans residues 166–184 (KATEKYCLRMPNKWNFSFD). Residues 185-209 (FSYASILSLAVYVPGSPHMFTYMLA) form a helical membrane-spanning segment. The Cytoplasmic portion of the chain corresponds to 210-221 (QRKKALAKAKAA).

The protein belongs to the very long-chain fatty acids dehydratase HACD family.

It is found in the endoplasmic reticulum membrane. It catalyses the reaction a very-long-chain (3R)-3-hydroxyacyl-CoA = a very-long-chain (2E)-enoyl-CoA + H2O. Its pathway is lipid metabolism; fatty acid biosynthesis. Catalyzes the third of the four reactions of the long-chain fatty acids elongation cycle. This endoplasmic reticulum-bound enzymatic process, allows the addition of two carbons to the chain of long- and very long-chain fatty acids/VLCFAs per cycle. This enzyme catalyzes the dehydration of the 3-hydroxyacyl-CoA intermediate into trans-2,3-enoyl-CoA, within each cycle of fatty acid elongation. Thereby, it participates in the production of VLCFAs of different chain lengths that are involved in multiple biological processes as precursors of membrane lipids and lipid mediators. May be an anti-phosphatase that prevents CDKA-1 dephosphorylation and activation. Involved in the hormonal control of cell division and differentiation. Required for proliferation control of meristematic and non-meristematic cells. Negative regulator of the cell cycle. The chain is Very-long-chain (3R)-3-hydroxyacyl-CoA dehydratase PASTICCINO 2B (PAS2B) from Oryza sativa subsp. japonica (Rice).